The sequence spans 159 residues: Small ribosomal subunit protein uS13 (159 aa).

The segment at 136–159 (QRTRSTGRSGATVGVTRKKTQAKK) is disordered. The segment covering 138 to 149 (TRSTGRSGATVG) has biased composition (low complexity).

It belongs to the universal ribosomal protein uS13 family. In terms of assembly, part of the 30S ribosomal subunit. Forms a loose heterodimer with protein S19. Forms two bridges to the 50S subunit in the 70S ribosome.

Located at the top of the head of the 30S subunit, it contacts several helices of the 16S rRNA. In the 70S ribosome it contacts the 23S rRNA (bridge B1a) and protein L5 of the 50S subunit (bridge B1b), connecting the 2 subunits; these bridges are implicated in subunit movement. The sequence is that of Small ribosomal subunit protein uS13 from Methanothrix thermoacetophila (strain DSM 6194 / JCM 14653 / NBRC 101360 / PT) (Methanosaeta thermophila).